The following is a 278-amino-acid chain: Alpha-tocopherol transfer protein (278 aa).

The region spanning 88–253 is the CRAL-TRIO domain; that stretch reads RPRSILGLLK…EYGGKEFSME (166 aa). Asp-185 provides a ligand contact to a 1,2-diacyl-sn-glycero-3-phospho-(1D-myo-inositol-3,4-bisphosphate). Phe-187 is a binding site for (+)-alpha-tocopherol. 190-192 contacts a 1,2-diacyl-sn-glycero-3-phospho-(1D-myo-inositol-3,4-bisphosphate); sequence KVR. Residue 208 to 211 participates in a 1,2-diacyl-sn-glycero-3-phospho-(1D-myo-inositol-4,5-bisphosphate) binding; the sequence is SMIK. Positions 217 and 221 each coordinate a 1,2-diacyl-sn-glycero-3-phospho-(1D-myo-inositol-3,4-bisphosphate).

Monomer and homotetramer. Phosphatidylinositol 4,5-bisphosphate binding induces the formation of homotetramers. Phosphatidylinositol 3,4-bisphosphate is less efficient in inducing tetramerization.

Its subcellular location is the cytoplasm. Its function is as follows. Binds (+)-alpha-tocopherol, enhances its transfer between separate membranes, and stimulates its release from liver cells. Binds both phosphatidylinositol 3,4-bisphosphate and phosphatidylinositol 4,5-bisphosphate; the resulting conformation change is important for the release of the bound alpha-tocopherol. The sequence is that of Alpha-tocopherol transfer protein (Ttpa) from Mus musculus (Mouse).